Here is a 141-residue protein sequence, read N- to C-terminus: Hemoglobin subunit alpha-D (141 aa).

The Globin domain maps to 1-141 (MLSADEKQLI…VSDVLAEKYR (141 aa)). Heme b contacts are provided by His58 and His87.

Belongs to the globin family. As to quaternary structure, heterotetramer of two alpha-D chains and two beta chains. As to expression, red blood cells.

Its function is as follows. Involved in oxygen transport from the lung to the various peripheral tissues. The polypeptide is Hemoglobin subunit alpha-D (HBAD) (Phrynops hilarii (Snake-necked turtle)).